Reading from the N-terminus, the 142-residue chain is Small ribosomal subunit protein uS11 (142 aa).

A disordered region spans residues M1–A21. The span at G7–K17 shows a compositional bias: basic residues.

Belongs to the universal ribosomal protein uS11 family. Part of the 30S ribosomal subunit. Interacts with proteins S7 and S18. Binds to IF-3.

Its function is as follows. Located on the platform of the 30S subunit, it bridges several disparate RNA helices of the 16S rRNA. Forms part of the Shine-Dalgarno cleft in the 70S ribosome. The polypeptide is Small ribosomal subunit protein uS11 (Paenarthrobacter aurescens (strain TC1)).